A 158-amino-acid polypeptide reads, in one-letter code: Ribosome maturation factor RimP (158 aa).

This sequence belongs to the RimP family.

It is found in the cytoplasm. Functionally, required for maturation of 30S ribosomal subunits. This is Ribosome maturation factor RimP from Streptococcus uberis (strain ATCC BAA-854 / 0140J).